The following is a 238-amino-acid chain: 2,3,4,5-tetrahydropyridine-2,6-dicarboxylate N-acetyltransferase (238 aa).

This sequence belongs to the transferase hexapeptide repeat family. DapH subfamily.

It carries out the reaction (S)-2,3,4,5-tetrahydrodipicolinate + acetyl-CoA + H2O = L-2-acetamido-6-oxoheptanedioate + CoA. It functions in the pathway amino-acid biosynthesis; L-lysine biosynthesis via DAP pathway; LL-2,6-diaminopimelate from (S)-tetrahydrodipicolinate (acetylase route): step 1/3. In terms of biological role, catalyzes the transfer of an acetyl group from acetyl-CoA to tetrahydrodipicolinate. The protein is 2,3,4,5-tetrahydropyridine-2,6-dicarboxylate N-acetyltransferase of Pseudothermotoga lettingae (strain ATCC BAA-301 / DSM 14385 / NBRC 107922 / TMO) (Thermotoga lettingae).